The chain runs to 693 residues: Polyribonucleotide nucleotidyltransferase (693 aa).

Residues Asp-489 and Asp-495 each coordinate Mg(2+). The KH domain occupies 556–615 (PQIHVMNINPAKIKDVVGRGGATVKGIVEKTGAQIDTSDSGEVKVFAKDKKSMDMAVAMI). Positions 625-693 (GQVYKGKIVK…GRVKLSLVAR (69 aa)) constitute an S1 motif domain.

Belongs to the polyribonucleotide nucleotidyltransferase family. Component of the RNA degradosome, which is a multiprotein complex involved in RNA processing and mRNA degradation. The cofactor is Mg(2+).

It is found in the cytoplasm. It carries out the reaction RNA(n+1) + phosphate = RNA(n) + a ribonucleoside 5'-diphosphate. Involved in mRNA degradation. Catalyzes the phosphorolysis of single-stranded polyribonucleotides processively in the 3'- to 5'-direction. This chain is Polyribonucleotide nucleotidyltransferase, found in Francisella tularensis subsp. holarctica (strain FTNF002-00 / FTA).